The primary structure comprises 147 residues: Large ribosomal subunit protein bL9 (147 aa).

Belongs to the bacterial ribosomal protein bL9 family.

In terms of biological role, binds to the 23S rRNA. This is Large ribosomal subunit protein bL9 from Campylobacter fetus subsp. fetus (strain 82-40).